A 375-amino-acid chain; its full sequence is Cinnamyl alcohol dehydrogenase 3 (375 aa).

C44 lines the Zn(2+) pocket. Residue S46 participates in NADP(+) binding. 7 residues coordinate Zn(2+): H66, E67, C97, C100, C103, C111, and C160. Residues T164, 186–191 (GLGGLG), 209–214 (SRSSEK), T249, G273, and 296–298 (SQI) contribute to the NADP(+) site.

It belongs to the zinc-containing alcohol dehydrogenase family. In terms of assembly, homodimer. Zn(2+) is required as a cofactor. Expressed in the root tips. Expressed in the apical meristematic regions, leaf veins and at the base of the trichomes. Expressed at the base of the stems. Expressed in the abscission zones of newly formed siliques.

The enzyme catalyses (E)-cinnamyl alcohol + NADP(+) = (E)-cinnamaldehyde + NADPH + H(+). It catalyses the reaction (E)-coniferol + NADP(+) = (E)-coniferaldehyde + NADPH + H(+). The catalysed reaction is (E)-sinapyl alcohol + NADP(+) = (E)-sinapaldehyde + NADPH + H(+). It carries out the reaction (E)-4-coumaroyl alcohol + NADP(+) = (E)-4-coumaraldehyde + NADPH + H(+). The enzyme catalyses (E)-caffeyl alcohol + NADP(+) = (E)-caffeyl aldehyde + NADPH + H(+). Its pathway is aromatic compound metabolism; phenylpropanoid biosynthesis. Functionally, involved in lignin biosynthesis. Catalyzes the final step specific for the production of lignin monomers. Catalyzes the NADPH-dependent reduction of coniferaldehyde, 5-hydroxyconiferaldehyde, sinapaldehyde, 4-coumaraldehyde and caffeyl aldehyde to their respective alcohols. This is Cinnamyl alcohol dehydrogenase 3 from Arabidopsis thaliana (Mouse-ear cress).